Reading from the N-terminus, the 119-residue chain is Achromolysin (119 aa).

The protein belongs to the peptidase M4 family. Ca(2+) serves as cofactor. It depends on Zn(2+) as a cofactor.

It localises to the secreted. Its function is as follows. Has staphylolytic activity. This chain is Achromolysin, found in Achromobacter lyticus.